The following is a 511-amino-acid chain: Sporulation-specific chitinase 2 (511 aa).

An N-terminal signal peptide occupies residues 1 to 34 (MVGHSAQHRSKSSLVSHLLILLIFITIIIEMCLY). The GH18 domain occupies 73-472 (FISGVYYSNW…NAFNEGLHFN (400 aa)). The N-linked (GlcNAc...) asparagine glycan is linked to Asn147. Catalysis depends on Glu223, which acts as the Proton donor. N-linked (GlcNAc...) asparagine glycans are attached at residues Asn228, Asn456, and Asn472.

It belongs to the glycosyl hydrolase 18 family. Chitinase class III subfamily.

The protein resides in the secreted. The catalysed reaction is Random endo-hydrolysis of N-acetyl-beta-D-glucosaminide (1-&gt;4)-beta-linkages in chitin and chitodextrins.. The polypeptide is Sporulation-specific chitinase 2 (CTS2) (Saccharomyces cerevisiae (strain ATCC 204508 / S288c) (Baker's yeast)).